The following is a 288-amino-acid chain: Glucose-1-phosphate thymidylyltransferase (288 aa).

Residue Gly-8 coordinates dTDP-alpha-D-glucose. DTTP contacts are provided by Gly-8, Gly-11, Thr-12, Arg-13, Lys-23, Gln-24, Gln-80, Gly-85, and Asp-108. The dTDP-alpha-D-glucose site is built by Lys-23, Gln-24, Gln-80, Gly-85, Asp-108, Asn-109, Gly-143, Glu-158, Lys-159, Val-169, and Asp-222. Asp-108 serves as a coordination point for Mg(2+). Asp-222 is a binding site for Mg(2+).

Belongs to the glucose-1-phosphate thymidylyltransferase family. Mg(2+) serves as cofactor.

The catalysed reaction is dTTP + alpha-D-glucose 1-phosphate + H(+) = dTDP-alpha-D-glucose + diphosphate. Its pathway is carbohydrate biosynthesis; dTDP-L-rhamnose biosynthesis. Functionally, catalyzes the conversion of glucose-1-phosphate and dTTP to dTDP-glucose and pyrophosphate. Involved in the biosynthesis of the dTDP-L-rhamnose which is a component of the critical linker, D-N-acetylglucosamine-L-rhamnose disaccharide, which connects the galactan region of arabinogalactan to peptidoglycan via a phosphodiester linkage. The polypeptide is Glucose-1-phosphate thymidylyltransferase (rmlA) (Mycobacterium tuberculosis (strain CDC 1551 / Oshkosh)).